Reading from the N-terminus, the 1327-residue chain is ABC transporter 1 (1327 aa).

The next 6 membrane-spanning stretches (helical) occupy residues 47–67 (LGIL…IIFG), 100–120 (VYVG…WNLF), 170–190 (KVGI…IAFV), 195–215 (LGGE…VGGY), 228–248 (VAGA…VHAF), and 276–296 (VAVQ…LAFW). The ABC transmembrane type-1 1 domain maps to 47–326 (LGILAAIASG…TTYTVIFLLV (280 aa)). N-linked (GlcNAc...) asparagine glycosylation is found at Asn381, Asn390, and Asn406. An ABC transporter 1 domain is found at 386-663 (IELNNVSFAF…DGAYAGLVRL (278 aa)). 421-428 (GLSGSGKS) lines the ATP pocket. Asn463 and Asn674 each carry an N-linked (GlcNAc...) asparagine glycan. 6 helical membrane-spanning segments follow: residues 743-763 (FLAL…AVVF), 785-805 (FYGL…LGSW), 859-881 (LTGS…IALS), 888-910 (IALV…VITM), 971-991 (LWLA…YWWG), and 1005-1025 (FFIV…MFTL). Residues 743–1031 (FLALTSAFVV…MFTLAPDVSR (289 aa)) form the ABC transmembrane type-1 2 domain. The N-linked (GlcNAc...) asparagine glycan is linked to Asn1050. Residues 1054-1081 (PCQHLKPGNDLEANAEPREKRPDQSQGG) are disordered. Residues 1084–1323 (VSLNNVKFSY…SESYKINALH (240 aa)) form the ABC transporter 2 domain. 1119-1126 (GPSGAGKS) serves as a coordination point for ATP.

Belongs to the ABC transporter superfamily. ABCB family. Multidrug resistance exporter (TC 3.A.1.201) subfamily.

It is found in the membrane. Its function is as follows. ABC transporter; part of the gene cluster that mediates the biosynthesis of hydroxamate-containing siderophores that play a critical role in virulence via intracellular iron acquisition during macrophage infection. Probably involved in the excretion of the extracellular siderophores. This Ajellomyces capsulatus (Darling's disease fungus) protein is ABC transporter 1.